We begin with the raw amino-acid sequence, 244 residues long: DNA repair protein RecO (244 aa).

The protein belongs to the RecO family.

In terms of biological role, involved in DNA repair and RecF pathway recombination. This chain is DNA repair protein RecO, found in Geobacter metallireducens (strain ATCC 53774 / DSM 7210 / GS-15).